An 805-amino-acid polypeptide reads, in one-letter code: Replication restart protein PriA (805 aa).

The tract at residues 1–110 is 3'BD; the sequence is MNFAEVIVDV…QAMLPAALKA (110 aa). Positions 111 to 166 are linker; sequence KYEKELKIAHGADLPPQVERLFSETKTLLYSDIPDHETLKLIQRHVQKGDIDVTYK. The tract at residues 167 to 253 is WH; the sequence is VAQKTNKKMV…KESYEEVYRD (87 aa). In terms of domain architecture, Helicase ATP-binding spans 282–448; the sequence is TLDSDEHKVF…QKGVYELLSL (167 aa). 295-302 provides a ligand contact to ATP; it reads GVTGSGKT. A DEAH box motif is present at residues 391 to 394; that stretch reads DEEH. 8 residues coordinate Zn(2+): C510, C513, C519, C522, C537, C540, C550, and C553. The Helicase C-terminal domain occupies 545 to 699; it reads PVPHTCPECA…TFYQHEMAHR (155 aa).

Belongs to the helicase family. PriA subfamily. In terms of assembly, monomer. Component of the replication restart primosome which assembles in this order; PriA, DnaD then DnaB. The preferred DNA substrate mimics an arrested DNA replication fork with unreplicated lagging strand. Interacts with DnaD but not DnaB. Interacts with SSB (sbbA) via the latter's 35 residue C-terminal tail which tethers PriA to ssDNA. Colocalizes with DNA pol III subunit gamma/tau (dnaX). May interact with RarA. Zn(2+) is required as a cofactor.

The protein localises to the cytoplasm. Its subcellular location is the nucleoid. The catalysed reaction is Couples ATP hydrolysis with the unwinding of duplex DNA by translocating in the 3'-5' direction.. It catalyses the reaction ATP + H2O = ADP + phosphate + H(+). Its function is as follows. Initiates the restart of stalled replication forks, which reloads the replicative helicase on sites other than the origin of replication. Recognizes and binds to abandoned replication forks and remodels them to uncover a helicase loading site. Promotes assembly of the primosome at these replication forks. Serves as the initiating protein for assembly of the replication restart primosome; binding of PriA to an arrested DNA replication fork with unreplicated lagging strand triggers assembly. Sequentially DnaD (possibly as a dimer) and DnaB homotetramers bind. Assembly probably continues by loading of the DnaC replicative helicase aided by helicase loader DnaI. A single-strand (ss)DNA-dependent ATPase with helicase activity. Recognizes and binds the arrested nascent DNA chain at stalled replication forks. Binds forked DNA substrates and makes a larger complex with RarA; RarA has no effect on the helicase function. Binds ssDNA, D-loops and replication fork-like substrates but not double-stranded (ds)DNA; the preferred DNA substrate mimics an arrested DNA replication fork with an unreplicated lagging strand. Recognizes nicked dsDNA. A supershift on ssDNA occurs in the presence of single-stranded binding protein (SSB). Cannot substitute for E.coli PriA. Required for replication of plasmids that have a rolling circle mechanism, which produces circular single-stranded (ss)DNA intermediates corresponding to the lagging strand template, which are then converted into double-stranded (ds)DNA; priA is required to activate the conversion of ssDNA into dsDNA. The polypeptide is Replication restart protein PriA (Bacillus subtilis (strain 168)).